Here is a 1612-residue protein sequence, read N- to C-terminus: MAHFQQTMNNKVIEAGMGRNSLINDLAQRRVYDNAVEELNHRSRRPRVNFSKVISQEQIIQATNAYPEFEITFYNTQLAVHSMAGGLRALELEYLMMQIPFGSITYDIGGNFSAHLYKGRDYVHCCMPNLDIRDVARHINQQDTVSTYLARLERSKRGLPVFQQSAFNKYMNDPDAVCCDKRFQDCSYSAGLPGKTYAVGLHSIYDIPADEFGAALLRKDVHICYAAFHFSENLLLETTSAPLDEIGATFYKSGDRLSFFFQNESTLNYEHSYKNVIKYVCKTFFPASNRFVYHKEFMCTRVNTWFCKFTKVDTYFLFRGVYTRGEDSEQFYTAMDEAWEYKKTLAMLNSERTIFRDRAAVNFWFPKVKDMVIVPLFDGSVTSGKMKRSEVMVNKDFVYTVLNHIRTYQDKALTYKNVLSFVESIRSRVIINGVTARSEWDVDKSVLQALSMTFLLQTKLAEAKDQVVLKKFQKFDDTVTNLFWKQISDAVGDLFPSIKERLISGGFVKVAEQSLQIKTPDEYITPADKLVMEYQATEELQHLDISKPLERAEKYYNALSELSVLKECDEFDITQFKNLCEEKDIAPDVVAKVIVPIMKNELTLPFKNPTPEALSDALSPLPKDLDMRFCLLKLSTCAPFPSVKTLDSGLLPKQSYGDERQFESQSVVSVSDFHLKSVESVKMKSMSSAVYTGPLKVQQMKNYMDYLSASISATVSNLCKVLKDVYGADPESAEKSGVYDVVKGKWLLKPKDKCHAWGVAELNNGEKVIVLLEWADGFPICGDWRRVAVSSDSPIYSDMGKLQTLLSCLKDGEPVLRMPKVTLVDGVPGCGKTKEILETVNFDEDLILVPGKEACKMIIKRANKSGHVRATRDNVRTVDSFLMHLKPKTYNKLFIDEGLMLHTGCVNFLVALSHCREAMVFGDAEQIPFINRVANFPYPKHFRYTCLYHREVRRLSLRCPADVTHFMNSKYDGKVLCTNDVIRSVDAEVVRGKGVFNPKSKPLKGKIITFTQSDKAELKERGYEEVSTFGEINTVHEIQGETFEDVSVVRLTPTPLELISKSSPHVLVALTRHTKSFKYYSVVLDPLVKVWSDLSKVSDFILDMYKVDAGILXQLQVGSIFKGENLFVPCPKSGYISDMQTYYDTLVPGNSTILNEYDAVTMNLRENNLNVKDCTIDFSKSVSVPRQQQEFFTPAHRTAAERPRSAGLLENLVAMIKRNFNSPDLTGILDIEDTAELVVNKFWDAYIIDELSGGNVTPMTSDAFHRWMAKQEKSTIGQLADFDFVDLPAIDQYKHMIKAQPKQKLGLSPQDEYAALQTIVYHSKQINAIFGPLFSELTRQLLERIDSSKFLFYTRKTPEQIEAFFSDLDSTVPMEVLELDISKYDKSQNEFHCAVEYLIWEKLGLNGFLEEVWKQGHRKTSLKDYTAGIKTCLWYQRKSGDVTTFIGNTVIIAACLASMIPMDKVIKAAFCGDDSILYIPKGLDLPDIQSGANLMWNFEAKLYRKRYGYFCGRYIIHHDRGAIVYYDPLKLISKLGCKHIKSLDHLEEFRISLCDVSSSLNNCAYFGQLNDAIAEVHKTAVNGSFAFCSIVKYLSDKNLFRTLFNNGSSTKG.

The interval Phe-50–Met-452 is methyltransferase. The Alphavirus-like MT domain occupies Thr-72 to Val-280. One can recognise a (+)RNA virus helicase ATP-binding domain in the interval Pro-794 to Arg-953. Residues Thr-822–Tyr-1080 are helicase. Gly-826–Thr-833 serves as a coordination point for ATP. The (+)RNA virus helicase C-terminal domain maps to Arg-954–Leu-1112. The region spanning Met-1374–Asp-1487 is the RdRp catalytic domain.

This sequence belongs to the ssRNA positive-strand viruses RNA-directed RNA polymerase family. Heterodimer of a large and a small subunit.

The enzyme catalyses RNA(n) + a ribonucleoside 5'-triphosphate = RNA(n+1) + diphosphate. It carries out the reaction ATP + H2O = ADP + phosphate + H(+). In terms of biological role, is an RNA-dependent RNA polymerase active in viral RNA replication. Is a methyltransferase active in RNA capping and an RNA helicase. Methyltransferase displays a cytoplasmic capping enzyme activity. This function is necessary since all viral RNAs are synthesized in the cytoplasm, and host capping enzymes are restricted to the nucleus. Helicase region probably exhibits NTPase and RNA unwinding activities (Potential). It also acts as a suppressor of RNA-mediated gene silencing, also known as post-transcriptional gene silencing (PTGS), a mechanism of plant viral defense that limits the accumulation of viral RNAs. May mediate silencing suppression through either inhibition of HEN1-mediated siRNA or siRNA demethylation. The protein is Replicase large subunit of Cymbidium (ORSV).